Here is a 1022-residue protein sequence, read N- to C-terminus: Antigenic heat-stable 120 kDa protein (1022 aa).

Disordered regions lie at residues M1–T41 and G355–Q403. Residues E19–E34 show a composition bias toward basic and acidic residues. Composition is skewed to polar residues over residues G355 to Q380 and P387 to Q403.

Its subcellular location is the cytoplasm. The polypeptide is Antigenic heat-stable 120 kDa protein (sca4) (Rickettsia conorii (strain ATCC VR-613 / Malish 7)).